Consider the following 264-residue polypeptide: 3-methyl-2-oxobutanoate hydroxymethyltransferase (264 aa).

2 residues coordinate Mg(2+): Asp-45 and Asp-84. Residues 45–46 (DS), Asp-84, and Lys-112 each bind 3-methyl-2-oxobutanoate. Residue Glu-114 participates in Mg(2+) binding. Residue Glu-181 is the Proton acceptor of the active site.

The protein belongs to the PanB family. Homodecamer; pentamer of dimers. It depends on Mg(2+) as a cofactor.

It localises to the cytoplasm. The catalysed reaction is 3-methyl-2-oxobutanoate + (6R)-5,10-methylene-5,6,7,8-tetrahydrofolate + H2O = 2-dehydropantoate + (6S)-5,6,7,8-tetrahydrofolate. The protein operates within cofactor biosynthesis; (R)-pantothenate biosynthesis; (R)-pantoate from 3-methyl-2-oxobutanoate: step 1/2. In terms of biological role, catalyzes the reversible reaction in which hydroxymethyl group from 5,10-methylenetetrahydrofolate is transferred onto alpha-ketoisovalerate to form ketopantoate. The chain is 3-methyl-2-oxobutanoate hydroxymethyltransferase from Shewanella putrefaciens (strain CN-32 / ATCC BAA-453).